A 547-amino-acid chain; its full sequence is Chaperonin GroEL (547 aa).

ATP-binding positions include Thr30–Pro33, Lys51, Asp87–Thr91, Gly415, Asp479–Ala481, and Asp495.

Belongs to the chaperonin (HSP60) family. In terms of assembly, forms a cylinder of 14 subunits composed of two heptameric rings stacked back-to-back. Interacts with the co-chaperonin GroES.

The protein localises to the cytoplasm. It carries out the reaction ATP + H2O + a folded polypeptide = ADP + phosphate + an unfolded polypeptide.. Its function is as follows. Together with its co-chaperonin GroES, plays an essential role in assisting protein folding. The GroEL-GroES system forms a nano-cage that allows encapsulation of the non-native substrate proteins and provides a physical environment optimized to promote and accelerate protein folding. The protein is Chaperonin GroEL of Dichelobacter nodosus (strain VCS1703A).